Reading from the N-terminus, the 1141-residue chain is Sterol regulatory element-binding protein 2 (1141 aa).

Residues 1 to 50 (MDDSGELGGLETMETLTELGDELTLGDIDEMLQFVSNQVGEFPDLFSEQL) are transcriptional activation (acidic). The Cytoplasmic segment spans residues 1-479 (MDDSGELGGL…PPVALGMVDR (479 aa)). A disordered region spans residues 48-144 (EQLCSSFPGS…PQPQPQPQTQ (97 aa)). The segment covering 63-82 (SSGSSGSSSSSSNGRGSSSG) has biased composition (low complexity). The segment covering 88-97 (VQRSFTQVTL) has biased composition (polar residues). A compositionally biased stretch (low complexity) spans 98 to 110 (PSFSPSAASPQAP). Polar residues predominate over residues 114–126 (VKVSPTSVPTTPR). Residues 237 to 491 (QQVPVLVQPQ…ILLCVLTFLC (255 aa)) form an interaction with LMNA region. A bHLH domain is found at 330–380 (ERRTTHNIIEKRYRSSINDKIIELKDLVMGTDAKMHKSGVLRKAIDYIKYL). The tract at residues 380–401 (LQQVNHKLRQENMVLKLANQKN) is leucine-zipper. Lysine 464 participates in a covalent cross-link: Glycyl lysine isopeptide (Lys-Gly) (interchain with G-Cter in SUMO2). Residues 480–500 (SRILLCVLTFLCLSFNPLTSL) traverse the membrane as a helical segment. Topologically, residues 501–533 (LQWGGAHDSDQHPHSGSGRSVLSFESGSGGWFD) are lumenal. Residues 534-554 (WMMPTLLLWLVNGVIVLSVFV) form a helical membrane-spanning segment. Residues 555–1139 (KLLVHGEPVI…VKLGGGTAIA (585 aa)) lie on the Cytoplasmic side of the membrane. Serine 855 and serine 1098 each carry phosphoserine.

This sequence belongs to the SREBP family. In terms of assembly, forms a tight complex with SCAP, the SCAP-SREBP complex, in the endoplasmic reticulum membrane and the Golgi apparatus. Interacts with PAQR3; the interaction anchors the SCAP-SREBP complex to the Golgi apparatus in low cholesterol conditions. Interacts (via C-terminal domain) with RNF139. As to quaternary structure, homodimer; efficient DNA binding of the soluble transcription factor fragment requires dimerization with another bHLH protein. Interacts with LMNA. In terms of processing, processed in the Golgi apparatus, releasing the protein from the membrane. At low cholesterol the SCAP-SREBP complex is recruited into COPII vesicles for export from the endoplasmic reticulum. In the Golgi, complex SREBPs are cleaved sequentially by site-1 (MBTPS1, S1P) and site-2 (MBTPS2, S2P) protease. The first cleavage by site-1 protease occurs within the luminal loop, the second cleavage by site-2 protease occurs within the first transmembrane domain, releasing the transcription factor from the Golgi membrane. Apoptosis triggers cleavage by the cysteine proteases caspase-3 and caspase-7. Cleavage and activation is induced by mediated cholesterol efflux. Post-translationally, phosphorylated by AMPK, leading to suppress protein processing and nuclear translocation, and repress target gene expression. SCAP-free SREBF2 is ubiquitinated by the BCR(ARMC5) complex, leading to its degradation. In terms of processing, ubiquitinated; the nuclear form has a rapid turnover and is rapidly ubiquitinated and degraded by the proteasome in the nucleus. Ubiquitously expressed in adult and fetal tissues.

The protein localises to the endoplasmic reticulum membrane. It localises to the golgi apparatus membrane. It is found in the cytoplasmic vesicle. Its subcellular location is the COPII-coated vesicle membrane. The protein resides in the nucleus. Activation by cleavage is down-regulated upon activation of SIRT3-dependent PRKAA1/AMPK-alpha signaling cascade which leads to inhibition of ATP-consuming lipogenesis to restore cellular energy balance. In terms of biological role, precursor of the transcription factor form (Processed sterol regulatory element-binding protein 2), which is embedded in the endoplasmic reticulum membrane. Low sterol concentrations promote processing of this form, releasing the transcription factor form that translocates into the nucleus and activates transcription of genes involved in cholesterol biosynthesis. Functionally, key transcription factor that regulates expression of genes involved in cholesterol biosynthesis. Binds to the sterol regulatory element 1 (SRE-1) (5'-ATCACCCCAC-3'). Has dual sequence specificity binding to both an E-box motif (5'-ATCACGTGA-3') and to SRE-1 (5'-ATCACCCCAC-3'). Regulates transcription of genes related to cholesterol synthesis pathway. The sequence is that of Sterol regulatory element-binding protein 2 from Homo sapiens (Human).